A 502-amino-acid chain; its full sequence is Cytochrome P450 71B19 (502 aa).

Residues 1–21 traverse the membrane as a helical segment; that stretch reads MAISFLCVFLITFVSLIFFAK. Residue Cys444 coordinates heme.

The protein belongs to the cytochrome P450 family. The cofactor is heme.

The protein localises to the membrane. This chain is Cytochrome P450 71B19 (CYP71B19), found in Arabidopsis thaliana (Mouse-ear cress).